The chain runs to 255 residues: 3-dehydroquinate dehydratase (255 aa).

Residues 47–49 and Arg83 contribute to the 3-dehydroquinate site; that span reads EWR. His145 serves as the catalytic Proton donor/acceptor. Catalysis depends on Lys172, which acts as the Schiff-base intermediate with substrate. Residues Arg215, Ser234, and Gln238 each contribute to the 3-dehydroquinate site.

The protein belongs to the type-I 3-dehydroquinase family. Homodimer.

The enzyme catalyses 3-dehydroquinate = 3-dehydroshikimate + H2O. It functions in the pathway metabolic intermediate biosynthesis; chorismate biosynthesis; chorismate from D-erythrose 4-phosphate and phosphoenolpyruvate: step 3/7. Functionally, involved in the third step of the chorismate pathway, which leads to the biosynthesis of aromatic amino acids. Catalyzes the cis-dehydration of 3-dehydroquinate (DHQ) and introduces the first double bond of the aromatic ring to yield 3-dehydroshikimate. This Clostridium kluyveri (strain NBRC 12016) protein is 3-dehydroquinate dehydratase.